Reading from the N-terminus, the 81-residue chain is Small ribosomal subunit protein bS18 (81 aa).

This sequence belongs to the bacterial ribosomal protein bS18 family. Part of the 30S ribosomal subunit. Forms a tight heterodimer with protein bS6.

Functionally, binds as a heterodimer with protein bS6 to the central domain of the 16S rRNA, where it helps stabilize the platform of the 30S subunit. This chain is Small ribosomal subunit protein bS18, found in Leptospira borgpetersenii serovar Hardjo-bovis (strain JB197).